Here is a 190-residue protein sequence, read N- to C-terminus: Endoribonuclease YbeY (190 aa).

Zn(2+) contacts are provided by H147, H151, and H157.

Belongs to the endoribonuclease YbeY family. Zn(2+) serves as cofactor.

It is found in the cytoplasm. Single strand-specific metallo-endoribonuclease involved in late-stage 70S ribosome quality control and in maturation of the 3' terminus of the 16S rRNA. This chain is Endoribonuclease YbeY, found in Nitrobacter winogradskyi (strain ATCC 25391 / DSM 10237 / CIP 104748 / NCIMB 11846 / Nb-255).